The following is a 122-amino-acid chain: Holo-[acyl-carrier-protein] synthase (122 aa).

Residues aspartate 9 and glutamate 58 each contribute to the Mg(2+) site.

The protein belongs to the P-Pant transferase superfamily. AcpS family. Mg(2+) is required as a cofactor.

The protein localises to the cytoplasm. It catalyses the reaction apo-[ACP] + CoA = holo-[ACP] + adenosine 3',5'-bisphosphate + H(+). In terms of biological role, transfers the 4'-phosphopantetheine moiety from coenzyme A to a Ser of acyl-carrier-protein. This chain is Holo-[acyl-carrier-protein] synthase, found in Chlamydia felis (strain Fe/C-56) (Chlamydophila felis).